We begin with the raw amino-acid sequence, 77 residues long: Major pilus subunit operon regulatory protein (77 aa).

It to E.coli AfaF and DaaF.

Plays a role in the inhibition of methylation at the GATC1028 site located in the regulatory region upstream of the pabA promoter. May, in conjunction with the Mbf (methylation blocking factor), inhibits deoxyadenosine methylase from methylating the GATC1028 site. In Escherichia coli, this protein is Major pilus subunit operon regulatory protein (papI).